The primary structure comprises 203 residues: GTP cyclohydrolase-2 (203 aa).

GTP is bound at residue R49–E53. Residues C54, C65, and C67 each contribute to the Zn(2+) site. GTP-binding positions include Q70, E92–R94, and T114. Residue D126 is the Proton acceptor of the active site. R128 serves as the catalytic Nucleophile. The GTP site is built by T149 and K154.

Belongs to the GTP cyclohydrolase II family. Zn(2+) serves as cofactor.

It catalyses the reaction GTP + 4 H2O = 2,5-diamino-6-hydroxy-4-(5-phosphoribosylamino)-pyrimidine + formate + 2 phosphate + 3 H(+). It functions in the pathway cofactor biosynthesis; riboflavin biosynthesis; 5-amino-6-(D-ribitylamino)uracil from GTP: step 1/4. Catalyzes the conversion of GTP to 2,5-diamino-6-ribosylamino-4(3H)-pyrimidinone 5'-phosphate (DARP), formate and pyrophosphate. This is GTP cyclohydrolase-2 from Shewanella sp. (strain ANA-3).